Here is a 67-residue protein sequence, read N- to C-terminus: Large ribosomal subunit protein bL35 (67 aa).

The protein belongs to the bacterial ribosomal protein bL35 family.

This Dehalococcoides mccartyi (strain ATCC BAA-2266 / KCTC 15142 / 195) (Dehalococcoides ethenogenes (strain 195)) protein is Large ribosomal subunit protein bL35.